We begin with the raw amino-acid sequence, 66 residues long: Small ribosomal subunit protein bS21 (66 aa).

It belongs to the bacterial ribosomal protein bS21 family.

The protein is Small ribosomal subunit protein bS21 of Rickettsia africae (strain ESF-5).